The sequence spans 110 residues: Iron-sulfur cluster assembly protein CyaY (110 aa).

This sequence belongs to the frataxin family.

Functionally, involved in iron-sulfur (Fe-S) cluster assembly. May act as a regulator of Fe-S biogenesis. This is Iron-sulfur cluster assembly protein CyaY from Pseudomonas putida (strain W619).